The primary structure comprises 864 residues: A-kinase anchor protein 3 (864 aa).

Ser12 is subject to Phosphoserine; by STK33. Residues 125–138 are PKA-RII subunit binding domain; that stretch reads VSFYANRLTNLVIA. Disordered regions lie at residues 190 to 235 and 251 to 281; these read NISS…DKPG and AGDA…DFSN. Residues 204-218 are compositionally biased toward polar residues; the sequence is SGSSQAPGLRYTSTL. Phosphoserine is present on Ser206. Residues 219-235 show a composition bias toward basic and acidic residues; it reads KIKESTKEGKCPDDKPG. Residue Ser405 is modified to Phosphoserine. Tyr406 carries the post-translational modification Phosphotyrosine. The segment at 619-638 is disordered; the sequence is VHEQNTQEEEIHPCERPKTP. Over residues 627–638 the composition is skewed to basic and acidic residues; it reads EEIHPCERPKTP.

It belongs to the AKAP110 family. In terms of assembly, interacts with ROPN1 and ROPN1L. Interacts with QRICH2. In terms of processing, phosphorylated by STK33 during sperm flagella assembly. Phosphorylated on tyrosine.

It is found in the cytoplasmic vesicle. The protein localises to the secretory vesicle. It localises to the acrosome. The protein resides in the cell projection. Its subcellular location is the cilium. It is found in the flagellum. Its function is as follows. Structural component of sperm fibrous sheath. Required for the formation of the subcellular structure of the sperm flagellum, sperm motility and male fertility. The polypeptide is A-kinase anchor protein 3 (Mus musculus (Mouse)).